A 617-amino-acid polypeptide reads, in one-letter code: MKQSKMLIPTLREMPSDAQVISHALMVRAGYVRQVSAGIYAYLPLANRTIEKFKTIMRQEFEKIGAVEMLAPALLTADLWRESGRYETYGEDLYKLKNRDQSDFILGPTHEETFTTLVRDAVKSYKQLPLNLYQIQSKYRDEKRPRNGLLRTREFIMKDGYSFHKDYEDLDVTYEDYRKAYEAIFTRAGLDFKGIIGDGGAMGGKDSQEFMAVTPNRTDLNRWLVLDKTIPSIDDIPEDVLEEIKVELSAWLVSGEDTIAYSTESSYAANLEMATNEYKPSTKAATFEEVTRVETPNCKSIDEVAGFLSIDENQTIKTLLFIADEQPVVALLVGNDQVNDVKLKNYLAADFLEPASEEQAKEIFGAGFGSLGPVNLPDSVKIIADRKVQDLANAVSGANQDGYHFTGVNPERDFTAEYVDIREVKEGEISPDGKGTLKFARGIEIGHIFKLGTRYSDSMGANILDENGRSNPIVMGCYGIGVSRILSAVIEQHARLFVNKTPKGAYRFAWGINFPEELAPFDVHLITVNVKDQESQDLTEKIEADLMLKGYEVLTDDRNERVGSKFSDSDLIGLPIRVTVGKKASEGIVEVKIKASGDTIEVHADNLIETLEILTKK.

The protein belongs to the class-II aminoacyl-tRNA synthetase family. ProS type 1 subfamily. Homodimer.

Its subcellular location is the cytoplasm. It carries out the reaction tRNA(Pro) + L-proline + ATP = L-prolyl-tRNA(Pro) + AMP + diphosphate. Its function is as follows. Catalyzes the attachment of proline to tRNA(Pro) in a two-step reaction: proline is first activated by ATP to form Pro-AMP and then transferred to the acceptor end of tRNA(Pro). As ProRS can inadvertently accommodate and process non-cognate amino acids such as alanine and cysteine, to avoid such errors it has two additional distinct editing activities against alanine. One activity is designated as 'pretransfer' editing and involves the tRNA(Pro)-independent hydrolysis of activated Ala-AMP. The other activity is designated 'posttransfer' editing and involves deacylation of mischarged Ala-tRNA(Pro). The misacylated Cys-tRNA(Pro) is not edited by ProRS. The polypeptide is Proline--tRNA ligase (Streptococcus agalactiae serotype III (strain NEM316)).